Reading from the N-terminus, the 271-residue chain is Dermonecrotic toxin LarSicTox-alphaIB1c (271 aa).

The active site involves His3. Mg(2+) contacts are provided by Glu23 and Asp25. His39 functions as the Nucleophile in the catalytic mechanism. Intrachain disulfides connect Cys43-Cys49 and Cys45-Cys188. Asp83 contributes to the Mg(2+) binding site. N-linked (GlcNAc...) asparagine glycosylation occurs at Asn248.

Belongs to the arthropod phospholipase D family. Class II subfamily. Mg(2+) is required as a cofactor. As to expression, expressed by the venom gland.

The protein resides in the secreted. It carries out the reaction an N-(acyl)-sphingosylphosphocholine = an N-(acyl)-sphingosyl-1,3-cyclic phosphate + choline. It catalyses the reaction an N-(acyl)-sphingosylphosphoethanolamine = an N-(acyl)-sphingosyl-1,3-cyclic phosphate + ethanolamine. The catalysed reaction is a 1-acyl-sn-glycero-3-phosphocholine = a 1-acyl-sn-glycero-2,3-cyclic phosphate + choline. The enzyme catalyses a 1-acyl-sn-glycero-3-phosphoethanolamine = a 1-acyl-sn-glycero-2,3-cyclic phosphate + ethanolamine. Dermonecrotic toxins cleave the phosphodiester linkage between the phosphate and headgroup of certain phospholipids (sphingolipid and lysolipid substrates), forming an alcohol (often choline) and a cyclic phosphate. This toxin acts on sphingomyelin (SM). It may also act on ceramide phosphoethanolamine (CPE), lysophosphatidylcholine (LPC) and lysophosphatidylethanolamine (LPE), but not on lysophosphatidylserine (LPS), and lysophosphatidylglycerol (LPG). It acts by transphosphatidylation, releasing exclusively cyclic phosphate products as second products. Induces dermonecrosis, hemolysis, increased vascular permeability, edema, inflammatory response, and platelet aggregation. The polypeptide is Dermonecrotic toxin LarSicTox-alphaIB1c (Loxosceles arizonica (Arizona brown spider)).